Reading from the N-terminus, the 389-residue chain is Dihydroorotase (389 aa).

Residues histidine 51 and histidine 53 each contribute to the Zn(2+) site. Substrate contacts are provided by residues 53–55 and asparagine 85; that span reads HVR. The Zn(2+) site is built by lysine 133, histidine 158, histidine 192, and aspartate 254. Residue lysine 133 is modified to N6-carboxylysine. The active site involves aspartate 254. Substrate-binding positions include histidine 258 and 272-273; that span reads PG.

The protein belongs to the metallo-dependent hydrolases superfamily. DHOase family. Class I DHOase subfamily. The cofactor is Zn(2+).

It catalyses the reaction (S)-dihydroorotate + H2O = N-carbamoyl-L-aspartate + H(+). It participates in pyrimidine metabolism; UMP biosynthesis via de novo pathway; (S)-dihydroorotate from bicarbonate: step 3/3. Its function is as follows. Catalyzes the reversible cyclization of carbamoyl aspartate to dihydroorotate. This chain is Dihydroorotase, found in Sulfurisphaera tokodaii (strain DSM 16993 / JCM 10545 / NBRC 100140 / 7) (Sulfolobus tokodaii).